Consider the following 195-residue polypeptide: Iron-sulfur flavoprotein AF_1519 (195 aa).

4 residues coordinate [4Fe-4S] cluster: cysteine 45, cysteine 48, cysteine 51, and cysteine 57.

It belongs to the SsuE family. Isf subfamily. In terms of assembly, homodimer. FMN serves as cofactor. [4Fe-4S] cluster is required as a cofactor.

In terms of biological role, redox-active protein probably involved in electron transport. This Archaeoglobus fulgidus (strain ATCC 49558 / DSM 4304 / JCM 9628 / NBRC 100126 / VC-16) protein is Iron-sulfur flavoprotein AF_1519.